Here is a 119-residue protein sequence, read N- to C-terminus: Ribosome-binding factor A (119 aa).

It belongs to the RbfA family. As to quaternary structure, monomer. Binds 30S ribosomal subunits, but not 50S ribosomal subunits or 70S ribosomes.

It localises to the cytoplasm. In terms of biological role, one of several proteins that assist in the late maturation steps of the functional core of the 30S ribosomal subunit. Associates with free 30S ribosomal subunits (but not with 30S subunits that are part of 70S ribosomes or polysomes). Required for efficient processing of 16S rRNA. May interact with the 5'-terminal helix region of 16S rRNA. In Chlorobium limicola (strain DSM 245 / NBRC 103803 / 6330), this protein is Ribosome-binding factor A.